Reading from the N-terminus, the 187-residue chain is Interferon alpha-1/2 (187 aa).

The signal sequence occupies residues 1 to 23 (MALPCSFSVALVLLSCHSLCCLA). Disulfide bonds link Cys24-Cys122 and Cys52-Cys160. Asn101 carries N-linked (GlcNAc...) asparagine glycosylation.

The protein belongs to the alpha/beta interferon family.

The protein resides in the secreted. Its function is as follows. Produced by macrophages, IFN-alpha have antiviral activities. Interferon stimulates the production of two enzymes: a protein kinase and an oligoadenylate synthetase. The chain is Interferon alpha-1/2 from Canis lupus familiaris (Dog).